Reading from the N-terminus, the 226-residue chain is Lipoprotein-releasing system ATP-binding protein LolD (226 aa).

The region spanning 6–226 is the ABC transporter domain; that stretch reads LSVEQVSKSF…QLQQGSLIRI (221 aa). 42–49 serves as a coordination point for ATP; it reads GESGCGKS.

This sequence belongs to the ABC transporter superfamily. Lipoprotein translocase (TC 3.A.1.125) family. As to quaternary structure, the complex is composed of two ATP-binding proteins (LolD) and two transmembrane proteins (LolC and LolE).

The protein localises to the cell inner membrane. Part of the ABC transporter complex LolCDE involved in the translocation of mature outer membrane-directed lipoproteins, from the inner membrane to the periplasmic chaperone, LolA. Responsible for the formation of the LolA-lipoprotein complex in an ATP-dependent manner. The sequence is that of Lipoprotein-releasing system ATP-binding protein LolD from Treponema pallidum (strain Nichols).